The sequence spans 610 residues: Nuclear factor 7, ovary (610 aa).

The region spanning 21–75 is the Tudor-knot domain; it reads NVGSTYPCKRSDGSQHDADIVKTRYNKQAGREEYYVHYVGLNRRQNEWVDKSRLV. The segment at 79 to 127 is disordered; sequence PPKEVETNGTDQEEMTEPTEQPDSKTPQKRKLEEPEPEPKKAKVEDKDA. Phosphothreonine; by CDK1 is present on Thr-104. A compositionally biased stretch (basic and acidic residues) spans 108–127; it reads RKLEEPEPEPKKAKVEDKDA. Residues 146–186 form an RING-type zinc finger; the sequence is CPLCVELFKDPVMVACGHNFCRSCIDKVWEGQSSFACPECK. The segment at 220–261 adopts a B box-type zinc-finger fold; that stretch reads RPLEKCSEHDERLKLYCKDDGTLGCVICRDSLKHASHNFLPI. Zn(2+) is bound by residues Cys-225, His-228, Cys-247, and His-253. Residues 295 to 374 adopt a coiled-coil conformation; the sequence is DKIEQHNKNV…AKERMEETDS (80 aa). One can recognise a B30.2/SPRY domain in the interval 415 to 610; the sequence is PIQYIMWKEL…VDALRFVHNQ (196 aa).

As to quaternary structure, monomer. In terms of tissue distribution, abundant in oocytes. At the neurula stage, low expression in dorsal embryo region including neural folds and somites.

The protein localises to the nucleus. Functionally, transcription factor that determines dorsal-ventral body axis. In Xenopus laevis (African clawed frog), this protein is Nuclear factor 7, ovary.